A 1073-amino-acid polypeptide reads, in one-letter code: Probable nuclear hormone receptor HR38 (1073 aa).

7 disordered regions span residues N55 to P87, T150 to D185, T263 to P326, A437 to Q458, K492 to P514, P529 to G579, and G618 to R640. Low complexity-rich tracts occupy residues P59–P82, D175–D185, and T263–A277. The segment covering H279 to H291 has biased composition (basic residues). Composition is skewed to low complexity over residues H292–P326, Q441–Q458, and S495–P514. A compositionally biased stretch (low complexity) spans Q619 to H636. Residues S741–T816 constitute a DNA-binding region (nuclear receptor). 2 NR C4-type zinc fingers span residues C744–C764 and C780–C804. Residues L819 to P841 are disordered. One can recognise an NR LBD domain in the interval P840–T1070.

Belongs to the nuclear hormone receptor family. NR4 subfamily. As to quaternary structure, forms a heterodimer with USP. In terms of tissue distribution, ubiquitously expressed in preblastoderm embryos, specifically in central nervous system and intestinal tract. Highly expressed in third instar larval imaginal disks and brain complexes, but not in ovaries.

The protein localises to the nucleus. In terms of biological role, binds to NGFI-B response elements. Plays an important role in late stages of epidermal metamorphosis. This is Probable nuclear hormone receptor HR38 (Hr38) from Drosophila melanogaster (Fruit fly).